A 1159-amino-acid chain; its full sequence is WASH complex subunit 5 (1159 aa).

Position 917 is a phosphoserine (Ser917).

It belongs to the strumpellin family. As to quaternary structure, component of the WASH core complex also described as WASH regulatory complex (SHRC) composed of WASH (WASHC1, WASH2P or WASH3P), WASHC2 (WASHC2A or WASHC2C), WASHC3, WASHC4 and WASHC5. The WASH core complex associates via WASHC2 with the F-actin-capping protein dimer (formed by CAPZA1, CAPZA2 or CAPZA3 and CAPZB) in a transient or substoichiometric manner which was initially described as WASH complex. Interacts with VCP, PI4K2A. In terms of tissue distribution, expressed ubiquitously.

Its subcellular location is the cytoplasm. The protein resides in the cytosol. The protein localises to the endoplasmic reticulum. It localises to the early endosome. In terms of biological role, acts as a component of the WASH core complex that functions as a nucleation-promoting factor (NPF) at the surface of endosomes, where it recruits and activates the Arp2/3 complex to induce actin polymerization, playing a key role in the fission of tubules that serve as transport intermediates during endosome sorting. May be involved in axonal outgrowth. Involved in cellular localization of ADRB2. Involved in cellular trafficking of BLOC-1 complex cargos such as ATP7A and VAMP7. This is WASH complex subunit 5 from Homo sapiens (Human).